The chain runs to 304 residues: Phosphate transport system permease protein PstA 1 (304 aa).

The next 6 membrane-spanning stretches (helical) occupy residues 36-56 (FFFTSFVVALIPLVWLLWVVI), 96-116 (AGVAAVLAVPLGLMTAVYLVE), 132-152 (VLAGVPSIVAALFVFSLWIAT), 155-175 (FQQSAFAVALALVLLMLPVVV), 204-224 (IVRIVAPIAMPGIVSGILLSI), and 276-296 (WGAALTLIIVVATINLAAAMI). Residues 89-297 (LYGTLVQAGV…TINLAAAMIR (209 aa)) enclose the ABC transmembrane type-1 domain.

This sequence belongs to the binding-protein-dependent transport system permease family. CysTW subfamily.

The protein localises to the cell membrane. In terms of biological role, part of the binding-protein-dependent transport system for phosphate; probably responsible for the translocation of the substrate across the membrane. The polypeptide is Phosphate transport system permease protein PstA 1 (pstA1) (Mycobacterium tuberculosis (strain CDC 1551 / Oshkosh)).